The primary structure comprises 492 residues: UDP-N-acetylmuramate--L-alanine ligase (492 aa).

126–132 (GTHGKTT) is an ATP binding site.

This sequence belongs to the MurCDEF family.

The protein resides in the cytoplasm. It carries out the reaction UDP-N-acetyl-alpha-D-muramate + L-alanine + ATP = UDP-N-acetyl-alpha-D-muramoyl-L-alanine + ADP + phosphate + H(+). The protein operates within cell wall biogenesis; peptidoglycan biosynthesis. Functionally, cell wall formation. In Serratia proteamaculans (strain 568), this protein is UDP-N-acetylmuramate--L-alanine ligase.